Reading from the N-terminus, the 174-residue chain is ATP synthase subunit delta (174 aa).

Belongs to the ATPase delta chain family. As to quaternary structure, F-type ATPases have 2 components, F(1) - the catalytic core - and F(0) - the membrane proton channel. F(1) has five subunits: alpha(3), beta(3), gamma(1), delta(1), epsilon(1). F(0) has three main subunits: a(1), b(2) and c(10-14). The alpha and beta chains form an alternating ring which encloses part of the gamma chain. F(1) is attached to F(0) by a central stalk formed by the gamma and epsilon chains, while a peripheral stalk is formed by the delta and b chains.

It localises to the cell inner membrane. Its function is as follows. F(1)F(0) ATP synthase produces ATP from ADP in the presence of a proton or sodium gradient. F-type ATPases consist of two structural domains, F(1) containing the extramembraneous catalytic core and F(0) containing the membrane proton channel, linked together by a central stalk and a peripheral stalk. During catalysis, ATP synthesis in the catalytic domain of F(1) is coupled via a rotary mechanism of the central stalk subunits to proton translocation. In terms of biological role, this protein is part of the stalk that links CF(0) to CF(1). It either transmits conformational changes from CF(0) to CF(1) or is implicated in proton conduction. The chain is ATP synthase subunit delta from Francisella tularensis subsp. tularensis (strain FSC 198).